Here is a 298-residue protein sequence, read N- to C-terminus: GTP cyclohydrolase FolE2 (298 aa).

The protein belongs to the GTP cyclohydrolase IV family.

It carries out the reaction GTP + H2O = 7,8-dihydroneopterin 3'-triphosphate + formate + H(+). Its pathway is cofactor biosynthesis; 7,8-dihydroneopterin triphosphate biosynthesis; 7,8-dihydroneopterin triphosphate from GTP: step 1/1. Converts GTP to 7,8-dihydroneopterin triphosphate. The polypeptide is GTP cyclohydrolase FolE2 (Xylella fastidiosa (strain M23)).